The sequence spans 93 residues: uncharacterized protein (93 aa).

A helical membrane pass occupies residues 20–40 (VYIYLCFSLMTIALICYLIHI). A glycan (N-linked (GlcNAc...) asparagine; by host) is linked at Asn-78.

The protein belongs to the asfivirus KP93L family.

It localises to the host membrane. This is an uncharacterized protein from Ornithodoros (relapsing fever ticks).